A 380-amino-acid chain; its full sequence is Hydrogenase maturation factor HypD1 (380 aa).

Residues cysteine 36, cysteine 64, and cysteine 67 each coordinate Fe cation.

The protein belongs to the HypD family. It depends on [4Fe-4S] cluster as a cofactor.

It functions in the pathway protein modification; [NiFe] hydrogenase maturation. In terms of biological role, involved in the maturation of [NiFe] hydrogenases. Involved in the biosynthesis of the Fe(CN)(2)CO cofactor. This chain is Hydrogenase maturation factor HypD1 (hypD1), found in Bradyrhizobium diazoefficiens (strain JCM 10833 / BCRC 13528 / IAM 13628 / NBRC 14792 / USDA 110).